Reading from the N-terminus, the 161-residue chain is Allophycocyanin alpha chain (161 aa).

Asn71 is modified (N4-methylasparagine). Residue Cys81 participates in (2R,3E)-phycocyanobilin binding.

It belongs to the phycobiliprotein family. In terms of assembly, component of the phycobilisome. Heterodimer of an alpha and a beta chain. In terms of processing, contains one covalently linked phycocyanobilin chromophore.

It is found in the cellular thylakoid membrane. Its function is as follows. Light-harvesting photosynthetic bile pigment-protein from the phycobiliprotein complex. Allophycocyanin has a maximum absorption at approximately 650 nanometers. The sequence is that of Allophycocyanin alpha chain (apcA) from Arthrospira platensis (Spirulina platensis).